The chain runs to 93 residues: Large ribosomal subunit protein uL23 (93 aa).

It belongs to the universal ribosomal protein uL23 family. Part of the 50S ribosomal subunit. Contacts protein L29, and trigger factor when it is bound to the ribosome.

In terms of biological role, one of the early assembly proteins it binds 23S rRNA. One of the proteins that surrounds the polypeptide exit tunnel on the outside of the ribosome. Forms the main docking site for trigger factor binding to the ribosome. The sequence is that of Large ribosomal subunit protein uL23 from Natranaerobius thermophilus (strain ATCC BAA-1301 / DSM 18059 / JW/NM-WN-LF).